The chain runs to 348 residues: Large ribosomal subunit protein uL3m (348 aa).

The N-terminal 40 residues, 1-40 (MPGWRLLAWAGARVLDRGTGGLGTALGSGNRTDICVLVRS), are a transit peptide targeting the mitochondrion.

Belongs to the universal ribosomal protein uL3 family. In terms of assembly, component of the mitochondrial ribosome large subunit (39S) which comprises a 16S rRNA and about 50 distinct proteins.

It is found in the mitochondrion. The polypeptide is Large ribosomal subunit protein uL3m (MRPL3) (Bos taurus (Bovine)).